Consider the following 200-residue polypeptide: FMN-dependent NADH:quinone oxidoreductase 2 (200 aa).

Position 135-138 (serine 135–glycine 138) interacts with FMN.

The protein belongs to the azoreductase type 1 family. Homodimer. FMN is required as a cofactor.

It carries out the reaction 2 a quinone + NADH + H(+) = 2 a 1,4-benzosemiquinone + NAD(+). The catalysed reaction is N,N-dimethyl-1,4-phenylenediamine + anthranilate + 2 NAD(+) = 2-(4-dimethylaminophenyl)diazenylbenzoate + 2 NADH + 2 H(+). Its function is as follows. Quinone reductase that provides resistance to thiol-specific stress caused by electrophilic quinones. In terms of biological role, also exhibits azoreductase activity. Catalyzes the reductive cleavage of the azo bond in aromatic azo compounds to the corresponding amines. This chain is FMN-dependent NADH:quinone oxidoreductase 2, found in Clostridium acetobutylicum (strain ATCC 824 / DSM 792 / JCM 1419 / IAM 19013 / LMG 5710 / NBRC 13948 / NRRL B-527 / VKM B-1787 / 2291 / W).